A 545-amino-acid chain; its full sequence is Chaperonin GroEL 1 (545 aa).

Residues 30 to 33 (TLGP), Lys51, 87 to 91 (DGTTT), Gly415, and Asp495 contribute to the ATP site.

Belongs to the chaperonin (HSP60) family. Forms a cylinder of 14 subunits composed of two heptameric rings stacked back-to-back. Interacts with the co-chaperonin GroES.

The protein localises to the cytoplasm. The catalysed reaction is ATP + H2O + a folded polypeptide = ADP + phosphate + an unfolded polypeptide.. Its function is as follows. Together with its co-chaperonin GroES, plays an essential role in assisting protein folding. The GroEL-GroES system forms a nano-cage that allows encapsulation of the non-native substrate proteins and provides a physical environment optimized to promote and accelerate protein folding. The polypeptide is Chaperonin GroEL 1 (Rhizobium meliloti (strain 1021) (Ensifer meliloti)).